The sequence spans 398 residues: Lysophosphatidylserine lipase ABHD12 (398 aa).

A compositionally biased stretch (basic and acidic residues) spans 1–16 (MRKRTEPVALEHERRT). Positions 1–24 (MRKRTEPVALEHERRTASGSPSAG) are disordered. The Cytoplasmic portion of the chain corresponds to 1-74 (MRKRTEPVAL…RKGLCFRLRK (74 aa)). A helical membrane pass occupies residues 75–95 (ILFFVLGLYVAIPFLIKLCPG). Topologically, residues 96–398 (IQAKLIFLNF…LGKSEPGRQH (303 aa)) are extracellular. The N-linked (GlcNAc...) asparagine glycan is linked to Asn123. Ser246 (nucleophile) is an active-site residue. Active-site charge relay system residues include Asp333 and His372.

The protein belongs to the serine esterase family.

Its subcellular location is the endoplasmic reticulum membrane. It catalyses the reaction 1-(9Z-octadecenoyl)-sn-glycero-3-phospho-L-serine + H2O = sn-glycero-3-phospho-L-serine + (9Z)-octadecenoate + H(+). The catalysed reaction is 1-(9Z-octadecenoyl)-sn-glycero-3-phospho-(1'-sn-glycerol) + H2O = sn-glycero-3-phospho-(1'-sn-glycerol) + (9Z)-octadecenoate + H(+). It carries out the reaction 1-(9Z-octadecenoyl)-sn-glycero-3-phospho-(1D-myo-inositol) + H2O = sn-glycero-3-phospho-1D-myo-inositol + (9Z)-octadecenoate + H(+). The enzyme catalyses 1-(9Z-octadecenoyl)-sn-glycero-3-phosphoethanolamine + H2O = sn-glycero-3-phosphoethanolamine + (9Z)-octadecenoate + H(+). It catalyses the reaction 1-(9Z-octadecenoyl)-sn-glycero-3-phosphocholine + H2O = 1-(9Z-octadecenoyl)-sn-glycerol + phosphocholine + H(+). The catalysed reaction is 2-(9Z-octadecenoyl)-glycerol + H2O = glycerol + (9Z)-octadecenoate + H(+). It carries out the reaction 1-hexadecanoyl-sn-glycero-3-phospho-L-serine + H2O = sn-glycero-3-phospho-L-serine + hexadecanoate + H(+). The enzyme catalyses 2-(5Z,8Z,11Z,14Z-eicosatetraenoyl)-glycerol + H2O = glycerol + (5Z,8Z,11Z,14Z)-eicosatetraenoate + H(+). It catalyses the reaction Hydrolyzes glycerol monoesters of long-chain fatty acids.. The catalysed reaction is 1-decanoylglycerol + H2O = decanoate + glycerol + H(+). It carries out the reaction 1-dodecanoylglycerol + H2O = dodecanoate + glycerol + H(+). The enzyme catalyses 1-tetradecanoylglycerol + H2O = tetradecanoate + glycerol + H(+). It catalyses the reaction 2-hexadecanoylglycerol + H2O = glycerol + hexadecanoate + H(+). The catalysed reaction is 1-(9Z-octadecenoyl)-glycerol + H2O = glycerol + (9Z)-octadecenoate + H(+). It carries out the reaction 2-(9Z,12Z-octadecadienoyl)-glycerol + H2O = (9Z,12Z)-octadecadienoate + glycerol + H(+). The enzyme catalyses 1-(5Z,8Z,11Z,14Z-eicosatetraenoyl)-glycerol + H2O = glycerol + (5Z,8Z,11Z,14Z)-eicosatetraenoate + H(+). It catalyses the reaction 1-(9Z,12Z-octadecadienoyl)-glycerol + H2O = (9Z,12Z)-octadecadienoate + glycerol + H(+). The catalysed reaction is 1-hexadecanoylglycerol + H2O = glycerol + hexadecanoate + H(+). It carries out the reaction 1-octadecanoylglycerol + H2O = octadecanoate + glycerol + H(+). The enzyme catalyses 1-octadecanoyl-2-(9,10-epoxyoctadecanoyl)-sn-glycero-3-phospho-L-serine + H2O = 9,10-epoxyoctadecanoate + 1-octadecanoyl-sn-glycero-3-phosphoserine + H(+). It catalyses the reaction 1-octadecanoyl-2-(10-hydroxyoctadecanoyl)-sn-glycero-3-phospho-L-serine + H2O = 1-octadecanoyl-sn-glycero-3-phosphoserine + 10-hydroxyoctadecanoate + H(+). The catalysed reaction is 1-hexadecanoyl-2-(10-hydroxyoctadecanoyl)-sn-glycero-3-phospho-L-serine + H2O = 10-hydroxyoctadecanoate + 1-hexadecanoyl-sn-glycero-3-phospho-L-serine + H(+). In terms of biological role, lysophosphatidylserine (LPS) lipase that mediates the hydrolysis of lysophosphatidylserine, a class of signaling lipids that regulates immunological and neurological processes. Represents a major lysophosphatidylserine lipase in the brain, thereby playing a key role in the central nervous system. Also able to hydrolyze oxidized phosphatidylserine; oxidized phosphatidylserine is produced in response to severe inflammatory stress and constitutes a proapoptotic 'eat me' signal. Also has monoacylglycerol (MAG) lipase activity: hydrolyzes 2-arachidonoylglycerol (2-AG), thereby acting as a regulator of endocannabinoid signaling pathways. Has a strong preference for very-long-chain lipid substrates; substrate specificity is likely due to improved catalysis and not improved substrate binding. The polypeptide is Lysophosphatidylserine lipase ABHD12 (Bos taurus (Bovine)).